The primary structure comprises 572 residues: Acetyl-coenzyme A synthetase (572 aa).

T260 is a binding site for CoA. ATP is bound by residues 333 to 335 (GEP), 354 to 359 (DTWWMT), D440, and R455. Residue S463 participates in CoA binding. Position 466 (R466) interacts with ATP. Mg(2+) is bound by residues V477, H479, and I482. CoA is bound at residue K524. N6-acetyllysine is present on K549.

It belongs to the ATP-dependent AMP-binding enzyme family. Interacts with FloT. Requires Mg(2+) as cofactor. Acetylated. Deacetylation by the SIR2-homolog deacetylase activates the enzyme.

Its subcellular location is the cell membrane. It is found in the membrane raft. It carries out the reaction acetate + ATP + CoA = acetyl-CoA + AMP + diphosphate. Catalyzes the conversion of acetate into acetyl-CoA (AcCoA), an essential intermediate at the junction of anabolic and catabolic pathways. AcsA undergoes a two-step reaction. In the first half reaction, AcsA combines acetate with ATP to form acetyl-adenylate (AcAMP) intermediate. In the second half reaction, it can then transfer the acetyl group from AcAMP to the sulfhydryl group of CoA, forming the product AcCoA. Has a role in growth and sporulation on acetate. This Bacillus subtilis (strain 168) protein is Acetyl-coenzyme A synthetase (acsA).